The following is a 165-amino-acid chain: Ribosome maturation factor RimM (165 aa).

Residues 94-165 (EDEFYIADLN…YVILNYQTKV (72 aa)) enclose the PRC barrel domain.

The protein belongs to the RimM family. Binds ribosomal protein uS19.

It localises to the cytoplasm. Its function is as follows. An accessory protein needed during the final step in the assembly of 30S ribosomal subunit, possibly for assembly of the head region. Essential for efficient processing of 16S rRNA. May be needed both before and after RbfA during the maturation of 16S rRNA. It has affinity for free ribosomal 30S subunits but not for 70S ribosomes. The sequence is that of Ribosome maturation factor RimM from Rickettsia prowazekii (strain Madrid E).